A 178-amino-acid chain; its full sequence is MARLIWLTGPSGSGKDSLLDALRAAPPPRLLIAHRYITRAADAGGENHVALTETEFDRRAALGLFAVSWEAHGFRYGIGCETEQWLLRGQNVVVNGSRLHLAQAQARFGSQLLPVCLQVTPAVLAARLRQRGREDEAEIARRLARAAQPQPDGCLILNNDGALAETVCQLRQILELHQ.

9–16 (GPSGSGKD) is a binding site for ATP.

This sequence belongs to the ribose 1,5-bisphosphokinase family.

The catalysed reaction is alpha-D-ribose 1,5-bisphosphate + ATP = 5-phospho-alpha-D-ribose 1-diphosphate + ADP. It participates in metabolic intermediate biosynthesis; 5-phospho-alpha-D-ribose 1-diphosphate biosynthesis; 5-phospho-alpha-D-ribose 1-diphosphate from D-ribose 5-phosphate (route II): step 3/3. Catalyzes the phosphorylation of ribose 1,5-bisphosphate to 5-phospho-D-ribosyl alpha-1-diphosphate (PRPP). This Pantoea vagans (strain C9-1) (Pantoea agglomerans (strain C9-1)) protein is Ribose 1,5-bisphosphate phosphokinase PhnN.